A 196-amino-acid chain; its full sequence is Molybdenum cofactor guanylyltransferase (196 aa).

GTP-binding positions include 10 to 12, Lys23, Asn51, Asp69, and Asp99; that span reads LAG. Asp99 is a binding site for Mg(2+).

The protein belongs to the MobA family. As to quaternary structure, monomer. The cofactor is Mg(2+).

The protein localises to the cytoplasm. It carries out the reaction Mo-molybdopterin + GTP + H(+) = Mo-molybdopterin guanine dinucleotide + diphosphate. Its function is as follows. Transfers a GMP moiety from GTP to Mo-molybdopterin (Mo-MPT) cofactor (Moco or molybdenum cofactor) to form Mo-molybdopterin guanine dinucleotide (Mo-MGD) cofactor. The protein is Molybdenum cofactor guanylyltransferase of Shewanella baltica (strain OS155 / ATCC BAA-1091).